The following is a 71-amino-acid chain: Venom peptide 2-long (71 aa).

The N-terminal stretch at 1-24 (MKQSIIIALFATIAVMACLQMVAA) is a signal peptide. AXPX repeat units follow at residues 24–27 (AVPA), 32–35 (AAPG), 44–47 (ASPE), 50–53 (ASPE), and 54–57 (AEPI). The propeptide occupies 25 to 54 (VPAPVPEAAPGPVAEAEAYASPEALASPEA). Leu68 carries the leucine amide modification.

It belongs to the MCD family. Protonectin subfamily. Expressed by the venom gland.

Its subcellular location is the secreted. It localises to the target cell membrane. Functionally, antimicrobial peptide with strong activity against the fungus B.cinerea (MIC=0.5 ug/ml), and poor activities against the fungus C.albicans (MIC=100 ug/ml), the Gram-positive bacterium S.aureus (MIC=125 ug/ml) and the Gram-negative bacterium E.coli (MIC=125 ug/ml). Antimicrobial peptide with strong activity against the fungus B.cinerea (MIC=0.4 uM), and poor activities against the fungus C.albicans (MIC=16 uM), the Gram-positive bacterium S.aureus (MIC=20 uM) and the Gram-negative bacterium E.coli (MIC=79 uM). Shows cytolytic activity against insect cell lines. Has potent hemolytic activity against ovine erythrocytes. Has potent hemolytic activity against human erythrocytes (EC(50)=31 uM). In vivo, peptide injection in the vicinity of the head and thorax of lepidopteran larvae induces feeding disorder followed by death due to starvation. This is Venom peptide 2-long from Orancistrocerus drewseni (Solitary wasp).